The sequence spans 68 residues: Large ribosomal subunit protein bL32 (68 aa).

The protein belongs to the bacterial ribosomal protein bL32 family.

The polypeptide is Large ribosomal subunit protein bL32 (Onion yellows phytoplasma (strain OY-M)).